Consider the following 608-residue polypeptide: Histone-arginine methyltransferase CARM1 (608 aa).

Positions 28–139 (ATVSVFPGAR…GHTLERSVFS (112 aa)) are interaction with C9orf72. The region spanning 147-454 (AVQYFQFYGY…KRQSYDISIV (308 aa)) is the SAM-dependent MTase PRMT-type domain. Positions 160, 169, 193, and 215 each coordinate S-adenosyl-L-methionine. S217 carries the phosphoserine modification. K228 is covalently cross-linked (Glycyl lysine isopeptide (Lys-Gly) (interchain with G-Cter in ubiquitin)). 2 residues coordinate S-adenosyl-L-methionine: E244 and S272. The tract at residues 347–380 (RILMAKSVKYTVNFLEAKEGDLHRIEIPFKFHML) is required for nuclear translocation. The interval 500-608 (TGSTYNLSSG…IPTNTMHYGS (109 aa)) is transactivation domain. R551 is subject to Dimethylated arginine.

This sequence belongs to the class I-like SAM-binding methyltransferase superfamily. Protein arginine N-methyltransferase family. In terms of assembly, homodimer. Interacts with NR1H4. Interacts with SNRPC. Interacts with the C-terminus of NCOA2/GRIP1, NCO3/ACTR and NCOA1/SRC1. Part of a complex consisting of CARM1, EP300/P300 and NCOA2/GRIP1. Interacts with FLII, TP53, myogenic factor MEF2, EP300/P300, TRIM24, CREBBP and CTNNB1. Interacts with RELA. Identified in a complex containing CARM1, TRIM24 and NCOA2/GRIP1. Interacts with NCOA3/SRC3. Interacts with SKP2. Interacts (via PH domain-like fold) with C9orf72. Interacts with PARP1; promoting PARP1 recruimtent to replication forks. Post-translationally, phosphorylation at Ser-217 is strongly increased during mitosis, and decreases rapidly to a very low, basal level after entry into the G1 phase of the cell cycle. Phosphorylation at Ser-217 interferes with S-adenosyl-L-methionine binding and strongly reduces methyltransferase activity. Phosphorylation at Ser-217 may promote cytosolic location. Auto-methylated on Arg-551. Methylation enhances transcription coactivator activity. Methylation is required for its role in the regulation of pre-mRNA alternative splicing. In terms of processing, ubiquitinated by E3 ubiquitin-protein ligase complex containing FBXO9 at Lys-228; leading to proteasomal degradation. Ubiquitously expressed. Within the brain, present in proliferating cells from lateral ventricular zone and dentate gyrus (at protein level).

Its subcellular location is the nucleus. The protein localises to the cytoplasm. It is found in the chromosome. The catalysed reaction is L-arginyl-[protein] + 2 S-adenosyl-L-methionine = N(omega),N(omega)-dimethyl-L-arginyl-[protein] + 2 S-adenosyl-L-homocysteine + 2 H(+). With respect to regulation, methylation of H3R17 (H3R17me) by CARM1 is stimulated by preacetylation of H3 'Lys-18' (H3K18ac) H3 'Lys-23' (H3K23ac) by EP300 and blocked by citrullination of H3 'Arg-17' (H3R17ci) by PADI4. Methylates (mono- and asymmetric dimethylation) the guanidino nitrogens of arginyl residues in several proteins involved in DNA packaging, transcription regulation, pre-mRNA splicing, and mRNA stability. Recruited to promoters upon gene activation together with histone acetyltransferases from EP300/P300 and p160 families, methylates histone H3 at 'Arg-17' (H3R17me), forming mainly asymmetric dimethylarginine (H3R17me2a), leading to activation of transcription via chromatin remodeling. During nuclear hormone receptor activation and TCF7L2/TCF4 activation, acts synergically with EP300/P300 and either one of the p160 histone acetyltransferases NCOA1/SRC1, NCOA2/GRIP1 and NCOA3/ACTR or CTNNB1/beta-catenin to activate transcription. During myogenic transcriptional activation, acts together with NCOA3/ACTR as a coactivator for MEF2C. During monocyte inflammatory stimulation, acts together with EP300/P300 as a coactivator for NF-kappa-B. Acts as a coactivator for PPARG, promotes adipocyte differentiation and the accumulation of brown fat tissue. Plays a role in the regulation of pre-mRNA alternative splicing by methylation of splicing factors. Also seems to be involved in p53/TP53 transcriptional activation. Methylates EP300/P300, both at 'Arg-2142', which may loosen its interaction with NCOA2/GRIP1, and at 'Arg-580' and 'Arg-604' in the KIX domain, which impairs its interaction with CREB and inhibits CREB-dependent transcriptional activation. Also methylates arginine residues in RNA-binding proteins PABPC1, ELAVL1 and ELAV4, which may affect their mRNA-stabilizing properties and the half-life of their target mRNAs. Acts as a transcriptional coactivator of ACACA/acetyl-CoA carboxylase by enriching H3R17 methylation at its promoter, thereby positively regulating fatty acid synthesis. Independently of its methyltransferase activity, involved in replication fork progression: promotes PARP1 recruitment to replication forks, leading to poly-ADP-ribosylation of chromatin at replication forks and reduced fork speed. The chain is Histone-arginine methyltransferase CARM1 (Carm1) from Mus musculus (Mouse).